The chain runs to 190 residues: Probable nicotinate-nucleotide adenylyltransferase (190 aa).

This sequence belongs to the NadD family.

It catalyses the reaction nicotinate beta-D-ribonucleotide + ATP + H(+) = deamido-NAD(+) + diphosphate. Its pathway is cofactor biosynthesis; NAD(+) biosynthesis; deamido-NAD(+) from nicotinate D-ribonucleotide: step 1/1. Functionally, catalyzes the reversible adenylation of nicotinate mononucleotide (NaMN) to nicotinic acid adenine dinucleotide (NaAD). The chain is Probable nicotinate-nucleotide adenylyltransferase from Staphylococcus saprophyticus subsp. saprophyticus (strain ATCC 15305 / DSM 20229 / NCIMB 8711 / NCTC 7292 / S-41).